Consider the following 146-residue polypeptide: MORN repeat-containing protein 4 (146 aa).

MORN repeat units lie at residues 16 to 38, 39 to 61, 62 to 84, and 85 to 107; these read YRGE…DGGT, YLGH…DGSR, YEGE…DNMT, and FEGE…DGSH.

As to quaternary structure, interacts with MYO3A.

Its subcellular location is the cytoplasm. The protein localises to the cell projection. It localises to the filopodium tip. It is found in the stereocilium. Functionally, plays a role in promoting axonal degeneration following neuronal injury by toxic insult or trauma. The sequence is that of MORN repeat-containing protein 4 (Morn4) from Mus musculus (Mouse).